The chain runs to 335 residues: Agamous-like MADS-box protein AGL104 (335 aa).

Residues 1 to 61 (MGRVKLEIKR…DRLSLFSGKT (61 aa)) form the MADS-box domain. Residues 124–151 (SDVEELEHEVCRLQQQLQMAEEELRRYE) are a coiled coil. A disordered region spans residues 302 to 335 (MPAQQSDIPGVTAETQVDHEVSDYETKVPQLSSQ). Residues 317–327 (QVDHEVSDYET) show a composition bias toward basic and acidic residues.

In terms of assembly, forms heterodimers with AGL30 and AGL65. In terms of tissue distribution, expressed in pollen.

It localises to the nucleus. In terms of biological role, probable transcription factor that forms heterodimers with the MADS-box proteins AGL30 and AGL65 and is involved in the regulation of pollen maturation at the late stages of pollen development and pollen tube growth. The protein is Agamous-like MADS-box protein AGL104 of Arabidopsis thaliana (Mouse-ear cress).